We begin with the raw amino-acid sequence, 144 residues long: Granulocyte-macrophage colony-stimulating factor (144 aa).

A signal peptide spans 1–17 (MWLQGLLLLGTVACSIS). A glycan (O-linked (GalNAc...) serine) is linked at serine 24. Threonine 27 carries O-linked (GalNAc...) threonine glycosylation. N-linked (GlcNAc...) asparagine glycosylation is found at asparagine 44 and asparagine 54. Intrachain disulfides connect cysteine 71–cysteine 113 and cysteine 105–cysteine 138.

It belongs to the GM-CSF family. In terms of assembly, monomer. The signaling GM-CSF receptor complex is a dodecamer of two head-to-head hexamers of two alpha, two beta, and two ligand subunits.

It localises to the secreted. Functionally, cytokine that stimulates the growth and differentiation of hematopoietic precursor cells from various lineages, including granulocytes, macrophages, eosinophils and erythrocytes. The polypeptide is Granulocyte-macrophage colony-stimulating factor (CSF2) (Chlorocebus aethiops (Green monkey)).